The sequence spans 55 residues: Mitochondrial import receptor subunit TOM7 homolog (55 aa).

Topologically, residues 1–20 are cytoplasmic; sequence MVKLSKEAKQRLQQLFKGSQ. Residues 21 to 36 traverse the membrane as a helical segment; that stretch reads FAIRWGFIPLVIYLGF. The Mitochondrial intermembrane segment spans residues 37–55; the sequence is KRGADPGMPEPTVLSLLWG.

This sequence belongs to the Tom7 family. Forms part of the preprotein translocase complex of the outer mitochondrial membrane (TOM complex) which consists of at least 7 different proteins (TOMM5, TOMM6, TOMM7, TOMM20, TOMM22, TOMM40 and TOMM70).

It is found in the mitochondrion outer membrane. Functionally, required for assembly and stability of the TOM complex. Positive regulator of PRKN translocation to damaged mitochondria. Acts probably by stabilizing PINK1 on the outer membrane of depolarized mitochondria. The polypeptide is Mitochondrial import receptor subunit TOM7 homolog (TOMM7) (Homo sapiens (Human)).